Reading from the N-terminus, the 494-residue chain is Aldehyde dehydrogenase family 7 member A1 (494 aa).

247–252 (GSSKVG) contributes to the NAD(+) binding site. Glu269 serves as the catalytic Proton acceptor. The Nucleophile role is filled by Cys303.

It belongs to the aldehyde dehydrogenase family. Homotetramer.

It catalyses the reaction an aldehyde + NAD(+) + H2O = a carboxylate + NADH + 2 H(+). This is Aldehyde dehydrogenase family 7 member A1 (BTG-26) from Brassica napus (Rape).